A 261-amino-acid chain; its full sequence is Lytic polysaccharide monooxygenase-like protein X325 (261 aa).

An N-terminal signal peptide occupies residues 1–17 (MQLSALALATLLATANA). Positions 18, 64, and 133 each coordinate Cu(2+). 2 disulfide bridges follow: C39-C139 and C108-C155. N157 and N183 each carry an N-linked (GlcNAc...) asparagine glycan. Positions 174-210 (LAENTQGSGNSSGHAHGSSGSGSASASKTDSKSSAAS) are disordered. The segment covering 180-210 (GSGNSSGHAHGSSGSGSASASKTDSKSSAAS) has biased composition (low complexity). Residue N238 is the site of GPI-anchor amidated asparagine attachment. The propeptide at 239-261 (SGSLAYVNGALAIGGVVAAALLI) is removed in mature form.

The protein belongs to the X325 family. Cu(2+) serves as cofactor.

The protein localises to the cell membrane. Lytic polysaccharide monooxygenase-like protein that has diverged to biological functions other than polysaccharide degradation since it does not perform oxidative cleavage of polysaccharides. Acts as a cell surface-bound protein that functions in the copper-accumulation pathway. The protein is Lytic polysaccharide monooxygenase-like protein X325 of Yarrowia lipolytica (strain CLIB 122 / E 150) (Yeast).